The following is a 525-amino-acid chain: Mitogen-activated protein kinase kinase 5 (525 aa).

The region spanning 59–317 (ETEGGFLGKG…CTELLRHPFI (259 aa)) is the Protein kinase domain. ATP contacts are provided by residues 65–73 (LGKGSSGSV) and Lys88. The active-site Proton acceptor is the Asp178. Residues 358-367 (SALPLASEGG) show a composition bias toward low complexity. Disordered regions lie at residues 358–392 (SALP…ERHD) and 438–468 (SASV…AQHR).

The protein belongs to the protein kinase superfamily. STE Ser/Thr protein kinase family. MAP kinase kinase subfamily. Requires Mg(2+) as cofactor.

It carries out the reaction L-tyrosyl-[protein] + ATP = O-phospho-L-tyrosyl-[protein] + ADP + H(+). The catalysed reaction is L-seryl-[protein] + ATP = O-phospho-L-seryl-[protein] + ADP + H(+). The enzyme catalyses L-threonyl-[protein] + ATP = O-phospho-L-threonyl-[protein] + ADP + H(+). In terms of biological role, protein kinase which phosphorylates and activates MPK4 in vitro. The chain is Mitogen-activated protein kinase kinase 5 from Leishmania mexicana.